A 181-amino-acid chain; its full sequence is Crossover junction endodeoxyribonuclease RuvC (181 aa).

Catalysis depends on residues Asp-7, Glu-67, and Asp-139. Residues Asp-7, Glu-67, and Asp-139 each coordinate Mg(2+).

This sequence belongs to the RuvC family. Homodimer which binds Holliday junction (HJ) DNA. The HJ becomes 2-fold symmetrical on binding to RuvC with unstacked arms; it has a different conformation from HJ DNA in complex with RuvA. In the full resolvosome a probable DNA-RuvA(4)-RuvB(12)-RuvC(2) complex forms which resolves the HJ. Mg(2+) serves as cofactor.

It localises to the cytoplasm. The catalysed reaction is Endonucleolytic cleavage at a junction such as a reciprocal single-stranded crossover between two homologous DNA duplexes (Holliday junction).. In terms of biological role, the RuvA-RuvB-RuvC complex processes Holliday junction (HJ) DNA during genetic recombination and DNA repair. Endonuclease that resolves HJ intermediates. Cleaves cruciform DNA by making single-stranded nicks across the HJ at symmetrical positions within the homologous arms, yielding a 5'-phosphate and a 3'-hydroxyl group; requires a central core of homology in the junction. The consensus cleavage sequence is 5'-(A/T)TT(C/G)-3'. Cleavage occurs on the 3'-side of the TT dinucleotide at the point of strand exchange. HJ branch migration catalyzed by RuvA-RuvB allows RuvC to scan DNA until it finds its consensus sequence, where it cleaves and resolves the cruciform DNA. The chain is Crossover junction endodeoxyribonuclease RuvC from Ralstonia pickettii (strain 12J).